Reading from the N-terminus, the 119-residue chain is uncharacterized protein (119 aa).

A disordered region spans residues 1–20 (MPHLAAEAHTWPPHISHSTL). The chain crosses the membrane as a helical span at residues 74–94 (LLFVVHQGHIGTGLIVFIICW).

The protein localises to the membrane. This is an uncharacterized protein from Saccharomyces cerevisiae (strain ATCC 204508 / S288c) (Baker's yeast).